A 321-amino-acid polypeptide reads, in one-letter code: MHKYQTHWVEHSIVKILSSAGKKYIALMAGGMSAEREVSLVSSEGVSKALIELGYSVTFIDMGADITVRLQEIKPDIVFNCLHGTYGEDGCLPGLLNIMRIPYTHSGMLSSALAFNKIHSRSWFLTNNINMAESIVVNKSDNIKNDPMKRPYVIKPLTQGSSIGVEVIFAEDNFNFADYDFPYGDQVIIEQYIKGRELQVAVLNGKALGVLEIKLLKNRFYDYETKYTEGFADHLCPAPLPANLYEKLLIESEKIYKTMNCKGPARAEFILEEQTNKLYALELNTHPGMTPLSIVPEIAAYAGINFTNLIEEIIKTASFES.

One can recognise an ATP-grasp domain in the interval 121–315; it reads RSWFLTNNIN…FTNLIEEIIK (195 aa). Residue 147–199 participates in ATP binding; it reads PMKRPYVIKPLTQGSSIGVEVIFAEDNFNFADYDFPYGDQVIIEQYIKGRELQ. Residues Glu-268, Glu-282, and Asn-284 each contribute to the Mg(2+) site.

It belongs to the D-alanine--D-alanine ligase family. Mg(2+) is required as a cofactor. Requires Mn(2+) as cofactor.

The protein localises to the cytoplasm. The catalysed reaction is 2 D-alanine + ATP = D-alanyl-D-alanine + ADP + phosphate + H(+). It functions in the pathway cell wall biogenesis; peptidoglycan biosynthesis. Its function is as follows. Cell wall formation. In Rickettsia massiliae (strain Mtu5), this protein is D-alanine--D-alanine ligase.